Reading from the N-terminus, the 1430-residue chain is 3'-5' RNA helicase YTHDC2 (1430 aa).

The interval 1 to 37 is disordered; the sequence is MSRPSSVSPRQPAPGGGGGGGPSPCGPGGGGRAKGLK. The span at 14 to 33 shows a compositional bias: gly residues; the sequence is PGGGGGGGPSPCGPGGGGRA. The R3H domain maps to 38–106; sequence DIRIDEEVKI…NRYLTVKKKD (69 aa). The Helicase ATP-binding domain maps to 203-369; the sequence is VKIIKENKVV…FGSCPVIYIQ (167 aa). Residue 216 to 223 participates in ATP binding; that stretch reads GETGSGKT. The DEAH box motif lies at 316 to 319; it reads DEVH. ANK repeat units follow at residues 506–538 and 539–571; these read TSATALMVAAGRGFASQVEQLISMGANVHSKAS and NGWMALDWAKHFGQTEIVDLLESYSASLEFGNL. The 173-residue stretch at 612–784 folds into the Helicase C-terminal domain; that stretch reads LLYNICHSCD…ELCLHTKLLA (173 aa). Phosphoserine is present on residues S1089, S1090, and S1092. Over residues 1164–1174 the composition is skewed to polar residues; it reads EQSAGLQQPSG. The tract at residues 1164–1288 is disordered; that stretch reads EQSAGLQQPS…SPSPRPNMPV (125 aa). Positions 1191-1200 are enriched in low complexity; sequence SSWRSNNSRK. Residue S1202 is modified to Phosphoserine. Positions 1231-1249 are enriched in basic and acidic residues; sequence KYKDRGILHPKRGTEDRSD. Low complexity predominate over residues 1250–1264; that stretch reads QSSVKSTDSSSYPSP. S1263, S1267, and S1281 each carry phosphoserine. In terms of domain architecture, YTH spans 1288–1418; the sequence is VRYFIMKSSN…QVGEQLLQLW (131 aa). Residues 1294 to 1296, W1310, and W1360 contribute to the RNA site; that span reads KSS.

The protein belongs to the DEAD box helicase family. DEAH subfamily. In terms of assembly, interacts with MEIOC; binds transcripts that regulate the mitotic cell cycle inhibiting progression into metaphase, thereby allowing meiotic prophase to proceed normally. Interacts (via ANK repeats) with XRN1. Interacts with ZCCHC4. Associates with the small ribosomal subunit. Interacts with RBM46.

It localises to the cytoplasm. It is found in the perinuclear region. It catalyses the reaction ATP + H2O = ADP + phosphate + H(+). In terms of biological role, 3'-5' RNA helicase that plays a key role in the male and female germline by promoting transition from mitotic to meiotic divisions in stem cells. Specifically recognizes and binds N6-methyladenosine (m6A)-containing RNAs, a modification present at internal sites of mRNAs and some non-coding RNAs that plays a role in the efficiency of RNA processing and stability. Essential for ensuring a successful progression of the meiotic program in the germline by regulating the level of m6A-containing RNAs. Acts by binding and promoting degradation of m6A-containing mRNAs: the 3'-5' RNA helicase activity is required for this process and RNA degradation may be mediated by XRN1 exoribonuclease. Required for both spermatogenesis and oogenesis. The protein is 3'-5' RNA helicase YTHDC2 of Pongo abelii (Sumatran orangutan).